The following is a 372-amino-acid chain: Chaperone protein DnaJ (372 aa).

A J domain is found at 5–70; it reads DYYEVLGVAK…DKRAAYDQFG (66 aa). The segment at 133–211 adopts a CR-type zinc-finger fold; the sequence is GTETKIRIPT…CHGEGRVKKH (79 aa). Residues C146, C149, C163, C166, C185, C188, C199, and C202 each contribute to the Zn(2+) site. 4 CXXCXGXG motif repeats span residues 146 to 153, 163 to 170, 185 to 192, and 199 to 206; these read CGTCHGSG, CSACGGHG, CPRCGGTG, and CPSCHGEG.

This sequence belongs to the DnaJ family. As to quaternary structure, homodimer. Zn(2+) is required as a cofactor.

Its subcellular location is the cytoplasm. Its function is as follows. Participates actively in the response to hyperosmotic and heat shock by preventing the aggregation of stress-denatured proteins and by disaggregating proteins, also in an autonomous, DnaK-independent fashion. Unfolded proteins bind initially to DnaJ; upon interaction with the DnaJ-bound protein, DnaK hydrolyzes its bound ATP, resulting in the formation of a stable complex. GrpE releases ADP from DnaK; ATP binding to DnaK triggers the release of the substrate protein, thus completing the reaction cycle. Several rounds of ATP-dependent interactions between DnaJ, DnaK and GrpE are required for fully efficient folding. Also involved, together with DnaK and GrpE, in the DNA replication of plasmids through activation of initiation proteins. This Thiobacillus denitrificans (strain ATCC 25259 / T1) protein is Chaperone protein DnaJ.